A 471-amino-acid polypeptide reads, in one-letter code: Acetylcholinesterase collagenic tail peptide (471 aa).

A signal peptide spans 1–30 (MLGILLQKATATLASGLNSSRAGMFPIALG). Positions 70-86 (CCLLTPPPPPMFPPPFF) are PRAD. Collagen-like domains are found at residues 118–282 (GPPG…SGLP) and 293–307 (GPKGERGLPGPVGRC). 2 disordered regions span residues 140–205 (EIGE…GEKG) and 237–267 (KGVSGAPGHRGPVGRPGKRGKTGLKGDIGPP). Composition is skewed to low complexity over residues 155 to 164 (VRGPRGMPGS) and 242 to 251 (APGHRGPVGR). 2 tandem repeats follow at residues 388–413 (FCGDEIVQVENGEECDDGNRIVTDSC) and 420–443 (YCGDGYLQSGLEECDGKDFGYHTC). Residues 388–443 (FCGDEIVQVENGEECDDGNRIVTDSCINCKQAYCGDGYLQSGLEECDGKDFGYHTC) are 2 X 26 AA approximate repeats.

This sequence belongs to the COLQ family. The asymmetric form of AChE is a disulfide-bonded oligomer composed of a collagenic subunit (Q) and a variable number of asymmetric (T) catalytic subunits. The N-terminal of the collagenic subunit (Q) associates with the C-terminal of the catalytic subunit (T). In terms of tissue distribution, expressed in electric organs but not in muscle.

The protein localises to the synapse. Functionally, anchors the catalytic subunits of asymmetric AChE to the synaptic basal lamina. The sequence is that of Acetylcholinesterase collagenic tail peptide from Torpedo marmorata (Marbled electric ray).